The primary structure comprises 157 residues: Glutaredoxin-2, mitochondrial (157 aa).

Residues 1-19 (MSWYRAASVGRRLVASGRI) constitute a mitochondrion transit peptide. In terms of domain architecture, Glutaredoxin spans 50-150 (VNQIQETISN…PLVHQCYLNK (101 aa)). Position 61 (cysteine 61) interacts with [2Fe-2S] cluster. Lysine 67 contributes to the glutathione binding site. S-glutathionyl cysteine; alternate is present on cysteine 70. A disulfide bridge connects residues cysteine 70 and cysteine 73. Glutathione is bound by residues glutamine 102 and valine 114. Cysteine 146 contacts [2Fe-2S] cluster.

The protein belongs to the glutaredoxin family. Monomer; active form. Homodimer; inactive form. The homodimer is probably linked by 1 2Fe-2S cluster.

The protein localises to the mitochondrion. It is found in the nucleus. The 2Fe-2S present in the homodimer leads to inactivation of the enzyme. The 2Fe-2S may serve as a redox sensor: the presence of one-electron oxidants or reductants leading to the loss of the 2Fe-2S cluster, subsequent monomerization and activation of the enzyme. Glutathione-dependent oxidoreductase that facilitates the maintenance of mitochondrial redox homeostasis upon induction of apoptosis by oxidative stress. Involved in response to hydrogen peroxide and regulation of apoptosis caused by oxidative stress. Acts as a very efficient catalyst of monothiol reactions because of its high affinity for protein glutathione-mixed disulfides. Can receive electrons not only from glutathione (GSH), but also from thioredoxin reductase supporting both monothiol and dithiol reactions. Efficiently catalyzes both glutathionylation and deglutathionylation of mitochondrial complex I, which in turn regulates the superoxide production by the complex. Overexpression decreases the susceptibility to apoptosis and prevents loss of cardiolipin and cytochrome c release. This is Glutaredoxin-2, mitochondrial (Glrx2) from Rattus norvegicus (Rat).